A 310-amino-acid chain; its full sequence is Olfactory receptor 2A14 (310 aa).

Residues 1–24 lie on the Extracellular side of the membrane; it reads MEGNKTWITDITLPRFQVGPALEI. Asn-4 carries N-linked (GlcNAc...) asparagine glycosylation. The helical transmembrane segment at 25–48 threads the bilayer; sequence LLCGLFSAFYTLTLLGNGVIFGII. Topologically, residues 49 to 56 are cytoplasmic; sequence CLDCKLHT. The chain crosses the membrane as a helical span at residues 57–78; the sequence is PMYFFLSHLAIVDISYASNYVP. At 79 to 99 the chain is on the extracellular side; that stretch reads KMLTNLMNQESTISFFPCIMQ. A disulfide bridge links Cys-96 with Cys-188. Residues 100-119 traverse the membrane as a helical segment; it reads TFLYLAFAHVECLILVVMSY. At 120 to 138 the chain is on the cytoplasmic side; sequence DRYADICHPLRYNSLMSWR. Residues 139 to 157 form a helical membrane-spanning segment; that stretch reads VCTVLAVASWVFSFLLALV. At 158 to 194 the chain is on the extracellular side; the sequence is PLVLILSLPFCGPHEINHFFCEILSVLKLACADTWLN. A helical transmembrane segment spans residues 195-218; it reads QVVIFAACVFILVGPLCLVLVSYL. The Cytoplasmic segment spans residues 219–235; the sequence is RILAAILRIQSGEGRRK. Residues 236–258 traverse the membrane as a helical segment; that stretch reads AFSTCSSHLCVVGLFFGSAIVTY. Residues 259–271 are Extracellular-facing; it reads MAPKSRHPEEQQK. The helical transmembrane segment at 272–291 threads the bilayer; the sequence is VLSLFYSLFNPMLNPLIYSL. Residues 292–310 lie on the Cytoplasmic side of the membrane; sequence RNAEVKGALRRALRKERLT.

Belongs to the G-protein coupled receptor 1 family.

The protein localises to the cell membrane. Functionally, odorant receptor. This Homo sapiens (Human) protein is Olfactory receptor 2A14 (OR2A14).